A 188-amino-acid chain; its full sequence is Potassium-transporting ATPase KdpC subunit (188 aa).

The helical transmembrane segment at 13–33 (MTAIFWIGCGLAYPLIFTGFA) threads the bilayer.

The protein belongs to the KdpC family. The system is composed of three essential subunits: KdpA, KdpB and KdpC.

Its subcellular location is the cell inner membrane. Part of the high-affinity ATP-driven potassium transport (or Kdp) system, which catalyzes the hydrolysis of ATP coupled with the electrogenic transport of potassium into the cytoplasm. This subunit acts as a catalytic chaperone that increases the ATP-binding affinity of the ATP-hydrolyzing subunit KdpB by the formation of a transient KdpB/KdpC/ATP ternary complex. The polypeptide is Potassium-transporting ATPase KdpC subunit (Gloeobacter violaceus (strain ATCC 29082 / PCC 7421)).